Here is a 308-residue protein sequence, read N- to C-terminus: Probable peptidyl-prolyl cis-trans isomerase B (308 aa).

The interval 74–123 is disordered; it reads DHQSTTSATPTDSASTSPPQAATAPPLPPFKPSANLGANCQYPPSPDKAV. Low complexity predominate over residues 77–97; it reads STTSATPTDSASTSPPQAATA. Residues 139-307 enclose the PPIase cyclophilin-type domain; the sequence is AQVSVSMVTN…TEVTITSVLL (169 aa).

This sequence belongs to the cyclophilin-type PPIase family.

The enzyme catalyses [protein]-peptidylproline (omega=180) = [protein]-peptidylproline (omega=0). PPIases accelerate the folding of proteins. It catalyzes the cis-trans isomerization of proline imidic peptide bonds in oligopeptides. In Mycobacterium tuberculosis (strain CDC 1551 / Oshkosh), this protein is Probable peptidyl-prolyl cis-trans isomerase B (ppiB).